We begin with the raw amino-acid sequence, 171 residues long: Adenine phosphoribosyltransferase (171 aa).

The protein belongs to the purine/pyrimidine phosphoribosyltransferase family. As to quaternary structure, homodimer.

The protein resides in the cytoplasm. It carries out the reaction AMP + diphosphate = 5-phospho-alpha-D-ribose 1-diphosphate + adenine. The protein operates within purine metabolism; AMP biosynthesis via salvage pathway; AMP from adenine: step 1/1. Catalyzes a salvage reaction resulting in the formation of AMP, that is energically less costly than de novo synthesis. The sequence is that of Adenine phosphoribosyltransferase from Acetivibrio thermocellus (strain ATCC 27405 / DSM 1237 / JCM 9322 / NBRC 103400 / NCIMB 10682 / NRRL B-4536 / VPI 7372) (Clostridium thermocellum).